The primary structure comprises 421 residues: Serine hydroxymethyltransferase (421 aa).

(6S)-5,6,7,8-tetrahydrofolate-binding positions include Leu-120 and 124-126; that span reads GHL. Residue Lys-229 is modified to N6-(pyridoxal phosphate)lysine. (6S)-5,6,7,8-tetrahydrofolate is bound at residue 354–356; that stretch reads SPF.

This sequence belongs to the SHMT family. As to quaternary structure, homodimer. Pyridoxal 5'-phosphate serves as cofactor.

It is found in the cytoplasm. It catalyses the reaction (6R)-5,10-methylene-5,6,7,8-tetrahydrofolate + glycine + H2O = (6S)-5,6,7,8-tetrahydrofolate + L-serine. The protein operates within one-carbon metabolism; tetrahydrofolate interconversion. It participates in amino-acid biosynthesis; glycine biosynthesis; glycine from L-serine: step 1/1. Catalyzes the reversible interconversion of serine and glycine with tetrahydrofolate (THF) serving as the one-carbon carrier. This reaction serves as the major source of one-carbon groups required for the biosynthesis of purines, thymidylate, methionine, and other important biomolecules. Also exhibits THF-independent aldolase activity toward beta-hydroxyamino acids, producing glycine and aldehydes, via a retro-aldol mechanism. The polypeptide is Serine hydroxymethyltransferase (Opitutus terrae (strain DSM 11246 / JCM 15787 / PB90-1)).